We begin with the raw amino-acid sequence, 543 residues long: Chaperonin GroEL (543 aa).

ATP contacts are provided by residues 29-32, Lys-50, 86-90, Gly-413, 480-482, and Asp-496; these read TLGP, DGTTT, and NAA. The tract at residues 524-543 is disordered; it reads EKPEKKESTPASAGAGDMDF.

Belongs to the chaperonin (HSP60) family. Forms a cylinder of 14 subunits composed of two heptameric rings stacked back-to-back. Interacts with the co-chaperonin GroES.

It localises to the cytoplasm. It carries out the reaction ATP + H2O + a folded polypeptide = ADP + phosphate + an unfolded polypeptide.. Together with its co-chaperonin GroES, plays an essential role in assisting protein folding. The GroEL-GroES system forms a nano-cage that allows encapsulation of the non-native substrate proteins and provides a physical environment optimized to promote and accelerate protein folding. The sequence is that of Chaperonin GroEL from Thermus thermophilus (strain ATCC BAA-163 / DSM 7039 / HB27).